The chain runs to 256 residues: Protein FixA (256 aa).

It belongs to the ETF beta-subunit/FixA family. In terms of assembly, heterodimer of FixA and FixB.

It functions in the pathway amine and polyamine metabolism; carnitine metabolism. Its function is as follows. Required for anaerobic carnitine reduction. May bring reductant to CaiA. This Salmonella dublin (strain CT_02021853) protein is Protein FixA.